The primary structure comprises 118 residues: GRB2-related adapter protein-like (118 aa).

The region spanning 1-58 (MESVALYSFQATESDELAFNKGDTLKILNMEDDQNWYKAELRGVEGFIPKNYIRVKPH) is the SH3 domain. Positions 60 to 118 (WYSGRISRQLAEEILMKRNHLGAFLIRESESSPGEFSVSVNNRAQRGPCLGPKSHSRLG) constitute an SH2 domain. The tract at residues 89-118 (ESSPGEFSVSVNNRAQRGPCLGPKSHSRLG) is disordered. A compositionally biased stretch (polar residues) spans 90 to 103 (SSPGEFSVSVNNRA).

It belongs to the GRB2/sem-5/DRK family.

In Homo sapiens (Human), this protein is GRB2-related adapter protein-like (GRAPL).